The chain runs to 141 residues: Cystatin (141 aa).

The first 26 residues, 1–26, serve as a signal peptide directing secretion; sequence MVHSQLPVAGPLRLLCALLLLPSATM. Positions 29-129 constitute a Cystatin domain; that stretch reads GGLSPRSVTD…CRFQVWSRPW (101 aa). The Secondary area of contact motif lies at 73-77; that stretch reads QVVSG. Intrachain disulfides connect Cys91–Cys107 and Cys120–Cys140.

Belongs to the cystatin family. In terms of tissue distribution, expressed at a low level by the venom gland (at protein level).

The protein localises to the secreted. Inhibits various C1 cysteine proteases including cathepsin L, papain and cathepsin B. This protein has no toxic activity and its function in the venom is unknown. It may play a role as a housekeeping or regulatory protein. The chain is Cystatin from Pseudechis porphyriacus (Red-bellied black snake).